The sequence spans 181 residues: Acireductone dioxygenase (181 aa).

Acidic residues predominate over residues 1–10 (MRAYIYDEES). The segment at 1–23 (MRAYIYDEESQLSPQDEHESSQS) is disordered. His82, His84, Glu88, and His128 together coordinate Fe(2+). Residues His82, His84, Glu88, and His128 each contribute to the Ni(2+) site.

It belongs to the acireductone dioxygenase (ARD) family. The cofactor is Fe(2+). Requires Ni(2+) as cofactor.

It is found in the cytoplasm. The protein localises to the nucleus. It catalyses the reaction 1,2-dihydroxy-5-(methylsulfanyl)pent-1-en-3-one + O2 = 4-methylsulfanyl-2-oxobutanoate + formate + 2 H(+). The enzyme catalyses 1,2-dihydroxy-5-(methylsulfanyl)pent-1-en-3-one + O2 = 3-(methylsulfanyl)propanoate + CO + formate + 2 H(+). Its pathway is amino-acid biosynthesis; L-methionine biosynthesis via salvage pathway; L-methionine from S-methyl-5-thio-alpha-D-ribose 1-phosphate: step 5/6. In terms of biological role, catalyzes 2 different reactions between oxygen and the acireductone 1,2-dihydroxy-3-keto-5-methylthiopentene (DHK-MTPene) depending upon the metal bound in the active site. Fe-containing acireductone dioxygenase (Fe-ARD) produces formate and 2-keto-4-methylthiobutyrate (KMTB), the alpha-ketoacid precursor of methionine in the methionine recycle pathway. Ni-containing acireductone dioxygenase (Ni-ARD) produces methylthiopropionate, carbon monoxide and formate, and does not lie on the methionine recycle pathway. The protein is Acireductone dioxygenase of Puccinia graminis f. sp. tritici (strain CRL 75-36-700-3 / race SCCL) (Black stem rust fungus).